Here is a 208-residue protein sequence, read N- to C-terminus: Small ribosomal subunit protein uS5 (208 aa).

Over residues 1–19 the composition is skewed to polar residues; it reads MTDSNNQSPNKKTSGSSGA. The interval 1–54 is disordered; it reads MTDSNNQSPNKKTSGSSGAPTAADGRQENRRSRGEKRGGRRDRRGQERDSEWQE. 2 stretches are compositionally biased toward basic and acidic residues: residues 25-37 and 44-54; these read GRQE…GEKR and RGQERDSEWQE. The S5 DRBM domain maps to 52-115; it reads WQERVVQIRR…ADGKKHLVRV (64 aa).

This sequence belongs to the universal ribosomal protein uS5 family. As to quaternary structure, part of the 30S ribosomal subunit. Contacts proteins S4 and S8.

Its function is as follows. With S4 and S12 plays an important role in translational accuracy. In terms of biological role, located at the back of the 30S subunit body where it stabilizes the conformation of the head with respect to the body. The chain is Small ribosomal subunit protein uS5 from Prochlorococcus marinus (strain NATL1A).